A 620-amino-acid chain; its full sequence is Proline--tRNA ligase (620 aa).

Belongs to the class-II aminoacyl-tRNA synthetase family. ProS type 1 subfamily. In terms of assembly, homodimer.

The protein resides in the cytoplasm. It catalyses the reaction tRNA(Pro) + L-proline + ATP = L-prolyl-tRNA(Pro) + AMP + diphosphate. In terms of biological role, catalyzes the attachment of proline to tRNA(Pro) in a two-step reaction: proline is first activated by ATP to form Pro-AMP and then transferred to the acceptor end of tRNA(Pro). As ProRS can inadvertently accommodate and process non-cognate amino acids such as alanine and cysteine, to avoid such errors it has two additional distinct editing activities against alanine. One activity is designated as 'pretransfer' editing and involves the tRNA(Pro)-independent hydrolysis of activated Ala-AMP. The other activity is designated 'posttransfer' editing and involves deacylation of mischarged Ala-tRNA(Pro). The misacylated Cys-tRNA(Pro) is not edited by ProRS. The sequence is that of Proline--tRNA ligase from Streptococcus suis (strain 98HAH33).